We begin with the raw amino-acid sequence, 327 residues long: MIYQMQMPAKIEVDESSHTDCFGRFIAQPLERGYGVTLGNVMRRVLLASLPGTAITGIKIDGVFHEFAAIDGVREDVPEIVLNLKKVRFKSTCKRNCKTSLTLVGPMDFTAGDIIAQEGEFEVLNKDMHVATINAGATVKIDLYIGRGRGYMPAEENRPEGMPIGYIAVDAIYTPIRNVKFTVENTRVGQRTDYEKMILDVETDGSVSPDDSISLAGKIITDHVTFFANFSPTEEEFTEEEFKQQDDEFETMRRLFHTKIEDLDLSVRSHNCLRLAEIDTIGELVSHKEDELLNYKNFGKKSLTELKEQLEKFDLKFGMDITKYQMK.

The alpha N-terminal domain (alpha-NTD) stretch occupies residues Met1 to Ser231. An alpha C-terminal domain (alpha-CTD) region spans residues Met252 to Lys327.

Belongs to the RNA polymerase alpha chain family. As to quaternary structure, homodimer. The RNAP catalytic core consists of 2 alpha, 1 beta, 1 beta' and 1 omega subunit. When a sigma factor is associated with the core the holoenzyme is formed, which can initiate transcription.

The catalysed reaction is RNA(n) + a ribonucleoside 5'-triphosphate = RNA(n+1) + diphosphate. Functionally, DNA-dependent RNA polymerase catalyzes the transcription of DNA into RNA using the four ribonucleoside triphosphates as substrates. This is DNA-directed RNA polymerase subunit alpha from Pelodictyon phaeoclathratiforme (strain DSM 5477 / BU-1).